We begin with the raw amino-acid sequence, 1304 residues long: Splicing factor 3B subunit 1 (1304 aa).

2 disordered regions span residues 100–119 (QYDPFAEHRPPKIADREDEY) and 124–148 (RTMIISPERLDPFADGGKTPDPKMN). Positions 104–119 (FAEHRPPKIADREDEY) are enriched in basic and acidic residues. Threonine 125 is modified (phosphothreonine). Serine 129 is subject to Phosphoserine. Residue lysine 141 is modified to N6-acetyllysine. Threonine 142 is subject to Phosphothreonine. Arginine 157 is modified (citrulline). The segment at 172–360 (LAEKAKAGEL…PVLTPGKTPI (189 aa)) is disordered. Serine 194 bears the Phosphoserine mark. A phosphothreonine mark is found at threonine 203, threonine 207, and threonine 211. An N6-acetyllysine; alternate modification is found at lysine 214. Lysine 214 is covalently cross-linked (Glycyl lysine isopeptide (Lys-Gly) (interchain with G-Cter in SUMO2); alternate). A phosphothreonine mark is found at threonine 223 and threonine 227. The segment at 223–491 (TPGHTPSLRW…VDESTLSPEE (269 aa)) is interaction with PPP1R8. Serine 229 carries the phosphoserine modification. The segment covering 231–241 (RWDETPGRAKG) has biased composition (basic and acidic residues). Residues threonine 235, threonine 244, threonine 248, threonine 257, threonine 261, threonine 267, threonine 273, and threonine 278 each carry the phosphothreonine modification. Serine 287 carries the phosphoserine modification. Residues 291 to 304 (NRWDETPKTERDTP) are compositionally biased toward basic and acidic residues. Phosphothreonine is present on residues threonine 296, threonine 299, threonine 303, and threonine 313. Serine 322 carries the post-translational modification Phosphoserine. 2 positions are modified to phosphothreonine: threonine 326 and threonine 328. Residue serine 332 is modified to Phosphoserine. A Phosphothreonine modification is found at threonine 341. Over residues 342 to 352 (PASQMGGSTPV) the composition is skewed to polar residues. Phosphoserine occurs at positions 344 and 349. Threonine 350 and threonine 354 each carry phosphothreonine. The residue at position 400 (serine 400) is a Phosphoserine. A Glycyl lysine isopeptide (Lys-Gly) (interchain with G-Cter in SUMO2); alternate cross-link involves residue lysine 413. Lysine 413 participates in a covalent cross-link: Glycyl lysine isopeptide (Lys-Gly) (interchain with G-Cter in SUMO1); alternate. Residue threonine 426 is modified to Phosphothreonine. A Glycyl lysine isopeptide (Lys-Gly) (interchain with G-Cter in SUMO2) cross-link involves residue lysine 430. Residue threonine 434 is modified to Phosphothreonine; by DYRK1A. Position 436 is a phosphothreonine (threonine 436). Residue serine 488 is modified to Phosphoserine. 11 HEAT repeats span residues 529–568 (GPLFNQILPLLMSPTLEDQERHLLVKVIDRILYKLDDLVR), 569–603 (PYVHKILVVIEPLLIDEDYYARVEGREIISNLAKA), 604–641 (AGLATMISTMRPDIDNMDEYVRNTTARAFAVVASALGI), 643–677 (SLLPFLKAVCKSKKSWQARHTGIKIVQQIAILMGC), 680–718 (LPHLRSLVEIIEHGLVDEQQKVRTISALAIAALAEAATP), 763–801 (NYYTREVMLILIREFQSPDEEMKKIVLKVVKQCCGTDGV), 843–881 (KVGAAEIISRIVDDLKDEAEQYRKMVMETIEKIMGNLGA), 1010–1048 (TPPIKDLLPRLTPILKNRHEKVQENCIDLVGRIADRGAE), 1052–1090 (AREWMRICFELLELLKAHKKAIRRATVNTFGYIAKAIGP), 1122–1160 (TCSPFTVLPALMNEYRVPELNVQNGVLKSLSFLFEYIGE), and 1163–1201 (KDYIYAVTPLLEDALMDRDLVHRQTASAVVQHMSLGVYG). An interaction with PHF5A region spans residues 547-550 (QERH). 2 positions are modified to N6-acetyllysine: lysine 554 and lysine 562. Residues 1156–1157 (EY) form an interaction with PHF5A region. Residues 1248 to 1304 (QYCLQGLFHPARKVRDVYWKIYNSIYIGSQDALIAHYPRIYNDDKNTYIRYDLDYIL) form an interaction with SF3B3 and SF3B5 region.

The protein belongs to the SF3B1 family. In terms of assembly, component of the 17S U2 SnRNP complex, a ribonucleoprotein complex that contains small nuclear RNA (snRNA) U2 and a number of specific proteins. Part of the SF3B subcomplex of the 17S U2 SnRNP complex. SF3B associates with the splicing subcomplex SF3A and a 12S RNA unit to form the U2 small nuclear ribonucleoproteins complex (U2 snRNP). Within the SF3B complex, interacts directly (via HEAT domain) with SF3B3, SF3B5, SF3B6 and (via HEAT domain) with PHF5A. The SF3B subcomplex interacts with U2AF2. Identified in the spliceosome C complex. Component of the minor (U12-type spliceosome) spliceosome. Within the minor spliceosome complex, interacts with SCNM1 and CRIPT. Component of the B-WICH complex, at least composed of SMARCA5/SNF2H, BAZ1B/WSTF, SF3B1, DEK, MYO1C, ERCC6, MYBBP1A and DDX21. Phosphorylated form interacts with PPP1R8. Interacts with PQBP1. Interacts with RBM17. Interacts with RBM39. Interacts with SETX. Interacts with RBM15. Interacts with USH1G. Interacts with SDE2. Interacts with U2AF1. Interacts with CACTIN. Interacts with ZRSR1. Interacts with CYREN. Phosphorylated. Phosphorylation occurs concomitantly with the splicing catalytic steps. Phosphorylation on Thr-244, Thr-248 and Thr-313 by cyclin-dependent kinases promotes interaction with PPP1R8 during mitosis. In terms of processing, citrullinated by PADI4. In terms of tissue distribution, ubiquitous.

The protein resides in the nucleus. It localises to the nucleus speckle. Its function is as follows. Component of the 17S U2 SnRNP complex of the spliceosome, a large ribonucleoprotein complex that removes introns from transcribed pre-mRNAs. The 17S U2 SnRNP complex (1) directly participates in early spliceosome assembly and (2) mediates recognition of the intron branch site during pre-mRNA splicing by promoting the selection of the pre-mRNA branch-site adenosine, the nucleophile for the first step of splicing. Within the 17S U2 SnRNP complex, SF3B1 is part of the SF3B subcomplex, which is required for 'A' complex assembly formed by the stable binding of U2 snRNP to the branchpoint sequence in pre-mRNA. Sequence independent binding of SF3A and SF3B subcomplexes upstream of the branch site is essential, it may anchor U2 snRNP to the pre-mRNA. May also be involved in the assembly of the 'E' complex. Also acts as a component of the minor spliceosome, which is involved in the splicing of U12-type introns in pre-mRNAs. Together with other U2 snRNP complex components may also play a role in the selective processing of microRNAs (miRNAs) from the long primary miRNA transcript, pri-miR-17-92. The sequence is that of Splicing factor 3B subunit 1 from Mus musculus (Mouse).